Consider the following 1222-residue polypeptide: MLFNINEKGEPLVISFAPFLSPEAIKHLQENERCSDQSQKRTAQQIEAIYTSGQNILVSASAGSGKTFVMVERILDKILRGVSIDRLFISTFTVKAATELRERIENKLYSQIAQTTDFQMKVYLTEQLQSLGQADIGTMDAFAQKVVSRYGYSIGISSQFRIMQDKAEQDVLKQEVFSKLFSEFMNQKEAPVFRALVKNFSGNCKDTSAFRELVYTCYSFSQSTENPKIWLQENFLSAAKTYQRLEDIPDHDIELLLLAMQDTANQLRDVTDMEDYGQLTKAGSRSAKYTKHLTIIEKLSDWVRDFKCLYGKAGLDRLIRDVTGLIPSGNDVTVSKVKYPVFKTLHQKLKQFRHLETILMYQKDCFPLLEQLQDFVLAFSEAYLAVKIQESAFEFSDITHFAIKILEENTDIRQSYQQHYHEVMVDEYQDNNHMQERLLTLLSNGHNRFMVGDIKQSIYRFRQADPQIFNQKFRDYQKKTEQGKVILLKENFRSQSEVLNVSNAVFSHLMDESVGDVLYDEQHQLIAGSHAQTVPYLDRRAQLLLYNSDKDDGNAPSDSEGISFSEVTIVAKEIIKLHNDKGVPFEDITLLVSSRTRNDIISHTFNQYGIPIVTDGGQQNYLKSVEVMVMLDTLRTINNPRNDYALVALLRSPMFAFDEDDLARIALQKDNELDKDCLYDKIQRAVIGRGAHPELIHDTLLGKLNIFLKTLKSWRRYAKLGSLYDLIWKIFNDRFYFDFVASQAKAEQAQANLYALALRANQFEKSGYKGLYCFIKMIDKVLETQNDLADVEVAAPKQAVNLMTIHKSKGLQFPYVFILNCDKRFSMTDIHKSFILNRQHGIGIKYLADIKGLLGETTLNSVKVSMETLPYQLNKQELRLATLSEQMRLLYVAMTRAEKKVYFIGKASKSKSQDITDPKKLGKLLPLALREQLLTFQDWLLAIADVFSTEDLYFDVRFIEDSDLTQESVGRLQTPQLLNPDDLKDNRQSETIARALDMLEAVSQLNANYEAAIHLPTVRTPSQLKAAYEPLLEPIGVDIIEKSSRSLSDFTLPHFSKKVKVEASHIGSALHQLMQVLPLSKPINQQTLLDALREIDSNEEVKTALDLKKIESFFCDTSLGQFFQTYQKHLYREAPFAILKVDPISQEEYVLRGIIDAYFLFDDHIVLVDYKTDKYKQPIELKKRYQQQLELYAEALTQTYKLPVTKRYLVLMGGGKPEIVEV.

The UvrD-like helicase ATP-binding domain occupies 39–495 (QKRTAQQIEA…ILLKENFRSQ (457 aa)). 60–67 (ASAGSGKT) contributes to the ATP binding site. The UvrD-like helicase C-terminal domain occupies 524-810 (QLIAGSHAQT…NLMTIHKSKG (287 aa)).

Belongs to the helicase family. AddA subfamily. In terms of assembly, heterodimer of AddA and AddB/RexB. Mg(2+) serves as cofactor.

It carries out the reaction Couples ATP hydrolysis with the unwinding of duplex DNA by translocating in the 3'-5' direction.. The catalysed reaction is ATP + H2O = ADP + phosphate + H(+). Functionally, the heterodimer acts as both an ATP-dependent DNA helicase and an ATP-dependent, dual-direction single-stranded exonuclease. Recognizes the chi site generating a DNA molecule suitable for the initiation of homologous recombination. The AddA nuclease domain is required for chi fragment generation; this subunit has the helicase and 3' -&gt; 5' nuclease activities. This is ATP-dependent helicase/nuclease subunit A from Streptococcus pyogenes serotype M12 (strain MGAS9429).